The sequence spans 638 residues: Growth hormone receptor (638 aa).

The N-terminal stretch at 1-18 is a signal peptide; it reads MDLWQLLLTLALAGSSDA. The Extracellular segment spans residues 19-264; the sequence is FSGSEPTAAI…NQFTCEEDFY (246 aa). N-linked (GlcNAc...) asparagine glycosylation is present at Asn-46. Intrachain disulfides connect Cys-56-Cys-66 and Cys-101-Cys-112. Asn-115 is a glycosylation site (N-linked (GlcNAc...) asparagine). The cysteines at positions 126 and 140 are disulfide-linked. The region spanning 151-254 is the Fibronectin type-III domain; the sequence is PPIALNWTLL…EVLYVTLPQM (104 aa). Asn-156, Asn-161, and Asn-200 each carry an N-linked (GlcNAc...) asparagine glycan. The WSXWS motif signature appears at 240 to 244; that stretch reads YGEFS. Residues 265–288 traverse the membrane as a helical segment; it reads FPWLLIIIFGIFGLTVMLFVFLFS. The Cytoplasmic portion of the chain corresponds to 289–638; that stretch reads KQQRIKMLIL…STDQLNKIMP (350 aa). The interval 294–379 is required for JAK2 binding; the sequence is KMLILPPVPV…HQKSHSNLGV (86 aa). The short motif at 297 to 305 is the Box 1 motif element; sequence ILPPVPVPK. The UbE motif motif lies at 340 to 349; the sequence is DSWVEFIELD. Ser-341 carries the phosphoserine modification. The disordered stretch occupies residues 353–388; sequence PDEKNEGSDTDRLLSSDHQKSHSNLGVKDGDSGRTS. Residues 356–372 show a composition bias toward basic and acidic residues; sequence KNEGSDTDRLLSSDHQK. Phosphotyrosine is present on residues Tyr-487 and Tyr-595.

Belongs to the type I cytokine receptor family. Type 1 subfamily. As to quaternary structure, on growth hormone (GH) binding, forms homodimers and binds JAK2 via a box 1-containing domain. In terms of processing, the soluble form (GHBP) is produced by phorbol ester-promoted proteolytic cleavage at the cell surface (shedding) by ADAM17/TACE. Shedding is inhibited by growth hormone (GH) binding to the receptor probably due to a conformational change in GHR rendering the receptor inaccessible to ADAM17. Post-translationally, on GH binding, phosphorylated on tyrosine residues in the cytoplasmic domain by JAK2. Ubiquitinated by the ECS(SOCS2) complex following ligand-binding and phosphorylation by JAK2, leading to its degradation by the proteasome. Regulation by the ECS(SOCS2) complex acts as a negative feedback loop of growth hormone receptor signaling. Ubiquitination is not sufficient for GHR internalization.

It is found in the cell membrane. Its subcellular location is the secreted. In terms of biological role, receptor for pituitary gland growth hormone (GH1) involved in regulating postnatal body growth. On ligand binding, couples to the JAK2/STAT5 pathway. Functionally, the soluble form (GHBP) acts as a reservoir of growth hormone in plasma and may be a modulator/inhibitor of GH signaling. This chain is Growth hormone receptor (GHR), found in Papio anubis (Olive baboon).